The following is a 216-amino-acid chain: Probable GTP-binding protein EngB (216 aa).

Residues glycine 37 to glutamate 214 form the EngB-type G domain. GTP-binding positions include glycine 45–serine 52, glycine 72–glutamate 76, aspartate 92–glycine 95, threonine 159–aspartate 162, and threonine 193–serine 195. Mg(2+) is bound by residues serine 52 and threonine 74.

The protein belongs to the TRAFAC class TrmE-Era-EngA-EngB-Septin-like GTPase superfamily. EngB GTPase family. It depends on Mg(2+) as a cofactor.

Necessary for normal cell division and for the maintenance of normal septation. This Rhodopseudomonas palustris (strain TIE-1) protein is Probable GTP-binding protein EngB.